We begin with the raw amino-acid sequence, 238 residues long: Succinate dehydrogenase iron-sulfur subunit (238 aa).

The region spanning 1–97 (MKLEFSIYRY…KIVIRPLPGL (97 aa)) is the 2Fe-2S ferredoxin-type domain. The [2Fe-2S] cluster site is built by Cys-55, Cys-60, and Cys-75. Residues 139–169 (QREKLDGLYECILCACCSTSCPSFWWNPDKF) enclose the 4Fe-4S ferredoxin-type domain. Cys-149, Cys-152, and Cys-155 together coordinate [4Fe-4S] cluster. Cys-159 contacts [3Fe-4S] cluster. Trp-164 serves as a coordination point for a ubiquinone. Cys-206 and Cys-212 together coordinate [3Fe-4S] cluster. Residue Cys-216 coordinates [4Fe-4S] cluster.

The protein belongs to the succinate dehydrogenase/fumarate reductase iron-sulfur protein family. As to quaternary structure, part of an enzyme complex containing four subunits: a flavoprotein, an iron-sulfur, cytochrome b-556, and a hydrophobic anchor protein. [2Fe-2S] cluster serves as cofactor. It depends on [3Fe-4S] cluster as a cofactor. The cofactor is [4Fe-4S] cluster.

It carries out the reaction a quinone + succinate = fumarate + a quinol. Its pathway is carbohydrate metabolism; tricarboxylic acid cycle; fumarate from succinate (bacterial route): step 1/1. Two distinct, membrane-bound, FAD-containing enzymes are responsible for the catalysis of fumarate and succinate interconversion; the fumarate reductase is used in anaerobic growth, and the succinate dehydrogenase is used in aerobic growth. The polypeptide is Succinate dehydrogenase iron-sulfur subunit (sdhB) (Salmonella typhimurium (strain LT2 / SGSC1412 / ATCC 700720)).